Consider the following 256-residue polypeptide: Stanniocalcin (256 aa).

Positions 1–18 (MLAKFGLCAVFLVLGTAA) are cleaved as a signal peptide. Positions 19–33 (TFDTDPEEASPRRAR) are excised as a propeptide. An N-linked (GlcNAc...) asparagine glycan is attached at asparagine 62. The segment at 204–241 (QGSNQGPNSAPAGWRWPMGSPPSFKIQPSMRGRDPTHL) is disordered.

The protein belongs to the stanniocalcin family. In terms of assembly, homodimer; disulfide-linked. As to expression, produced and secreted by the corpuscles of Stannius.

It localises to the secreted. In terms of biological role, its primary function is the prevention of hypercalcemia. Upon release into the circulation, it lowers calcium transport by the gills, thereby reducing its rate of influx from the environment into the extracellular compartment. STC also stimulates phosphate reabsorption by renal proximal tubules. The consequence of this action is increased levels of plasma phosphate, which combines with excess calcium and promotes its disposal into bone and scales. The sequence is that of Stanniocalcin (stc) from Oncorhynchus mykiss (Rainbow trout).